We begin with the raw amino-acid sequence, 550 residues long: MISDNLKKGVSRAPNRSLLKACGYTDEEIEKPFIGIVNSFTEVVPGHIHLNTLAEAAKKGVYANGGTPFEFNTMAVCDGIAMGHEGMRYSLPSREIIADTVESMAKAHGFDGLVLIPSCDKIVPGMIMGALRLNIPFIVITGGPMQPGELHGKKYDLISVFEGVGEYNVGKITKEELMEIETCACPGAGSCAGLFTANSMACLTETLGLSLPMCATTHATDAEKVRIAKRSGMKIVDLVKEDIKPTDLLTKESFENAILVDLALGGSSNTTLHIPALAYEIAPEFITLDDFDRLCDEVPHIASLRPGGDHFISDLHRAGGIPAVLKILEQKIRDANTVSGKSIKEIINEVKYIDYNIIRPVDKPVHETAGLRILKGNIAPDGCVVKISAVNPKMYKHEGPARVFNSEEETIDAILGGDIKEGDVVVIRYEGPAGGPGMREMLSPTSAICGMGLDDSVALITDGRFSGGSRGPCIGHISPEAMAGGPIAIIEEGDIIAIDMMAKEINLKISEEEIKERLANWKKPEIKVKKGYISRYAKLVSSANEGAVLK.

Asp78 lines the Mg(2+) pocket. Cys119 is a binding site for [2Fe-2S] cluster. Mg(2+) contacts are provided by Asp120 and Lys121. Lys121 carries the N6-carboxylysine modification. Cys191 is a binding site for [2Fe-2S] cluster. Glu440 contacts Mg(2+). Ser466 serves as the catalytic Proton acceptor.

The protein belongs to the IlvD/Edd family. In terms of assembly, homodimer. [2Fe-2S] cluster serves as cofactor. It depends on Mg(2+) as a cofactor.

The enzyme catalyses (2R)-2,3-dihydroxy-3-methylbutanoate = 3-methyl-2-oxobutanoate + H2O. It carries out the reaction (2R,3R)-2,3-dihydroxy-3-methylpentanoate = (S)-3-methyl-2-oxopentanoate + H2O. The protein operates within amino-acid biosynthesis; L-isoleucine biosynthesis; L-isoleucine from 2-oxobutanoate: step 3/4. It functions in the pathway amino-acid biosynthesis; L-valine biosynthesis; L-valine from pyruvate: step 3/4. Functions in the biosynthesis of branched-chain amino acids. Catalyzes the dehydration of (2R,3R)-2,3-dihydroxy-3-methylpentanoate (2,3-dihydroxy-3-methylvalerate) into 2-oxo-3-methylpentanoate (2-oxo-3-methylvalerate) and of (2R)-2,3-dihydroxy-3-methylbutanoate (2,3-dihydroxyisovalerate) into 2-oxo-3-methylbutanoate (2-oxoisovalerate), the penultimate precursor to L-isoleucine and L-valine, respectively. In Methanococcus aeolicus (strain ATCC BAA-1280 / DSM 17508 / OCM 812 / Nankai-3), this protein is Dihydroxy-acid dehydratase.